A 205-amino-acid polypeptide reads, in one-letter code: Proteasome subunit beta type-3 (205 aa).

The residue at position 2 (Ser-2) is an N-acetylserine. Residue Lys-77 is modified to N6-acetyllysine.

The protein belongs to the peptidase T1B family. In terms of assembly, the 26S proteasome consists of a 20S proteasome core and two 19S regulatory subunits. The 20S proteasome core is a barrel-shaped complex made of 28 subunits that are arranged in four stacked rings. The two outer rings are each formed by seven alpha subunits, and the two inner rings are formed by seven beta subunits. The proteolytic activity is exerted by three beta-subunits PSMB5, PSMB6 and PSMB7.

Its subcellular location is the cytoplasm. It is found in the nucleus. Its function is as follows. Non-catalytic component of the 20S core proteasome complex involved in the proteolytic degradation of most intracellular proteins. This complex plays numerous essential roles within the cell by associating with different regulatory particles. Associated with two 19S regulatory particles, forms the 26S proteasome and thus participates in the ATP-dependent degradation of ubiquitinated proteins. The 26S proteasome plays a key role in the maintenance of protein homeostasis by removing misfolded or damaged proteins that could impair cellular functions, and by removing proteins whose functions are no longer required. Associated with the PA200 or PA28, the 20S proteasome mediates ubiquitin-independent protein degradation. This type of proteolysis is required in several pathways including spermatogenesis (20S-PA200 complex) or generation of a subset of MHC class I-presented antigenic peptides (20S-PA28 complex). In Rattus norvegicus (Rat), this protein is Proteasome subunit beta type-3 (Psmb3).